Consider the following 490-residue polypeptide: Protein nucleotidyltransferase YdiU (490 aa).

Residues G89, G91, R92, K112, D124, G125, R175, and R182 each coordinate ATP. D251 functions as the Proton acceptor in the catalytic mechanism. Mg(2+) contacts are provided by N252 and D261. D261 is an ATP binding site.

This sequence belongs to the SELO family. Requires Mg(2+) as cofactor. Mn(2+) is required as a cofactor.

It catalyses the reaction L-seryl-[protein] + ATP = 3-O-(5'-adenylyl)-L-seryl-[protein] + diphosphate. The catalysed reaction is L-threonyl-[protein] + ATP = 3-O-(5'-adenylyl)-L-threonyl-[protein] + diphosphate. It carries out the reaction L-tyrosyl-[protein] + ATP = O-(5'-adenylyl)-L-tyrosyl-[protein] + diphosphate. The enzyme catalyses L-histidyl-[protein] + UTP = N(tele)-(5'-uridylyl)-L-histidyl-[protein] + diphosphate. It catalyses the reaction L-seryl-[protein] + UTP = O-(5'-uridylyl)-L-seryl-[protein] + diphosphate. The catalysed reaction is L-tyrosyl-[protein] + UTP = O-(5'-uridylyl)-L-tyrosyl-[protein] + diphosphate. Its function is as follows. Nucleotidyltransferase involved in the post-translational modification of proteins. It can catalyze the addition of adenosine monophosphate (AMP) or uridine monophosphate (UMP) to a protein, resulting in modifications known as AMPylation and UMPylation. The polypeptide is Protein nucleotidyltransferase YdiU (Vibrio vulnificus (strain CMCP6)).